We begin with the raw amino-acid sequence, 599 residues long: UvrABC system protein C (599 aa).

Residues 18–96 (QLPGVYKMLG…IKQHRPPYNI (79 aa)) enclose the GIY-YIG domain. The region spanning 207 to 242 (KELNQELIAKMEQAAADLEFEKAVFYRDRLSLLREV) is the UVR domain.

This sequence belongs to the UvrC family. As to quaternary structure, interacts with UvrB in an incision complex.

The protein resides in the cytoplasm. Functionally, the UvrABC repair system catalyzes the recognition and processing of DNA lesions. UvrC both incises the 5' and 3' sides of the lesion. The N-terminal half is responsible for the 3' incision and the C-terminal half is responsible for the 5' incision. The sequence is that of UvrABC system protein C from Acinetobacter baumannii (strain SDF).